A 231-amino-acid polypeptide reads, in one-letter code: Eukaryotic translation initiation factor 4E allele A (231 aa).

Positions 1–20 are enriched in basic and acidic residues; the sequence is MAAAEMERTTSFDAAEKLKA. Residues 1-36 are disordered; sequence MAAAEMERTTSFDAAEKLKAADAGGGEVDDELEEGE. The segment covering 27-36 has biased composition (acidic residues); the sequence is EVDDELEEGE. EIF4G-binding regions lie at residues 56-59 and 66-102; these read HPLE and FDSP…NNIH. MRNA contacts are provided by residues 74–79, Lys-106, and 124–125; these read RQTAWG and WE. Cys-129 and Cys-167 are joined by a disulfide. An EIF4G-binding region spans residues 150–159; sequence YTLLAMIGHQ. Residues 174–179 and 219–223 contribute to the mRNA site; these read RSKGEK and KRLDR.

It belongs to the eukaryotic initiation factor 4E family. As to quaternary structure, EIF4F is a multi-subunit complex, the composition of which varies with external and internal environmental conditions. It is composed of at least EIF4A, EIF4E and EIF4G. EIF4E is also known to interact with other partners. In higher plants two isoforms of EIF4F have been identified, named isoform EIF4F and isoform EIF(iso)4F. Isoform EIF4F has subunits p220 and p26, whereas isoform EIF(iso)4F has subunits p82 and p28. In terms of assembly, (Microbial infection) Interacts with viral genome-linked protein (VPg); this interaction is possible in susceptible hosts but impaired in resistant plants. According to the redox status, the Cys-129-Cys-167 disulfide bridge may have a role in regulating protein function by affecting its ability to bind capped mRNA.

The protein resides in the nucleus. It localises to the cytoplasm. Functionally, component of the protein complex eIF4F, which is involved in the recognition of the mRNA cap, ATP-dependent unwinding of 5'-terminal secondary structure and recruitment of mRNA to the ribosome. Recognizes and binds the 7-methylguanosine-containing mRNA cap during an early step in the initiation of protein synthesis and facilitates ribosome binding by inducing the unwinding of the mRNAs secondary structures. Key component of recessive resistance to potyviruses. (Microbial infection) Susceptibility host factor required for viral infection (e.g. Potato virus Y (PVY)) by recruiting viral RNAs to the host ribosomal complex via an interaction with viral genome-linked protein (VPg). This is Eukaryotic translation initiation factor 4E allele A from Solanum tuberosum (Potato).